A 564-amino-acid chain; its full sequence is Potassium-transporting ATPase potassium-binding subunit (564 aa).

10 consecutive transmembrane segments (helical) span residues 4–24, 67–87, 135–155, 179–199, 258–278, 286–306, 376–396, 420–440, 487–507, and 528–548; these read HEILLILAFFALVLVPAPFLG, TLALLAFNLAGLVLLFSILML, VGLTVQNFVSAAVGLCVLVAL, LYVLLPLCLLLALLLVWQGVP, FEVASIILIPAALVFTFGHYV, AILGCMLLLFCLGLGLSLWAE, IFGGVGAGLYGMLLFVLIAVF, LLVFTLLVMPVGVLVLGAIAA, LMIGLAMLIGRFGYILPILAI, and GPLFVSLLTVTILLVGGLTFL.

This sequence belongs to the KdpA family. In terms of assembly, the system is composed of three essential subunits: KdpA, KdpB and KdpC.

The protein resides in the cell inner membrane. In terms of biological role, part of the high-affinity ATP-driven potassium transport (or Kdp) system, which catalyzes the hydrolysis of ATP coupled with the electrogenic transport of potassium into the cytoplasm. This subunit binds the periplasmic potassium ions and delivers the ions to the membrane domain of KdpB through an intramembrane tunnel. The sequence is that of Potassium-transporting ATPase potassium-binding subunit from Pseudomonas aeruginosa (strain ATCC 15692 / DSM 22644 / CIP 104116 / JCM 14847 / LMG 12228 / 1C / PRS 101 / PAO1).